Reading from the N-terminus, the 465-residue chain is Glutamate--tRNA ligase (465 aa).

A 'HIGH' region motif is present at residues 11-21; the sequence is PSPTGFIHLGN. Residues 118–139 form a disordered region; it reads GEKPRYDGTWRPAPGKILPPPP. The 'KMSKS' region motif lies at 243–247; the sequence is KMSKR. Lys246 provides a ligand contact to ATP.

This sequence belongs to the class-I aminoacyl-tRNA synthetase family. Glutamate--tRNA ligase type 1 subfamily. In terms of assembly, monomer.

The protein resides in the cytoplasm. It carries out the reaction tRNA(Glu) + L-glutamate + ATP = L-glutamyl-tRNA(Glu) + AMP + diphosphate. Its function is as follows. Catalyzes the attachment of glutamate to tRNA(Glu) in a two-step reaction: glutamate is first activated by ATP to form Glu-AMP and then transferred to the acceptor end of tRNA(Glu). This chain is Glutamate--tRNA ligase, found in Ralstonia pickettii (strain 12J).